Reading from the N-terminus, the 135-residue chain is UPF0201 protein TON_1346 (135 aa).

Belongs to the UPF0201 family.

The protein is UPF0201 protein TON_1346 of Thermococcus onnurineus (strain NA1).